The primary structure comprises 92 residues: Small ribosomal subunit protein uS19c (92 aa).

It belongs to the universal ribosomal protein uS19 family.

Its subcellular location is the plastid. It is found in the chloroplast. Functionally, protein S19 forms a complex with S13 that binds strongly to the 16S ribosomal RNA. The sequence is that of Small ribosomal subunit protein uS19c from Pyropia yezoensis (Susabi-nori).